The chain runs to 262 residues: Putative hydro-lyase RHA1_ro03475 (262 aa).

The protein belongs to the D-glutamate cyclase family.

The chain is Putative hydro-lyase RHA1_ro03475 from Rhodococcus jostii (strain RHA1).